A 182-amino-acid chain; its full sequence is Large ribosomal subunit protein uL5 (182 aa).

Part of the 50S ribosomal subunit; part of the 5S rRNA/uL5/uL18/bL25 (TL7) subcomplex; has also been isolated as a complex with 5S rRNA, bL25 (TL7) and DNA binding protein II. Forms a bridge to the 30S subunit in the 70S ribosome, contacting protein uS13; this bridge is straddled by the 5S rRNA. Contacts the P site tRNA.

This is one of the proteins that bind and probably mediate the attachment of the 5S RNA into the large ribosomal subunit, where it forms part of the central protuberance. In the 70S ribosome it contacts protein S13 of the 30S subunit (forming bridge B1b) connecting the head of the 30S subunit to the top of the 50S subunit. The bridge itself contacts the P site tRNA and is implicated in movement during ribosome translocation. Also contacts the P site tRNA independently of the intersubunit bridge; the 5S rRNA and some of its associated proteins might help stabilize positioning of ribosome-bound tRNAs. The chain is Large ribosomal subunit protein uL5 (rplE) from Thermus thermophilus (strain ATCC 27634 / DSM 579 / HB8).